The sequence spans 326 residues: D-amino-acid oxidase (326 aa).

The FAD site is built by G14, V15, I16, D36, S44, A48, A49, I50, and V157. Positions 219 and 274 each coordinate D-proline. D-serine contacts are provided by Y219 and R274. R274, G299, G300, G302, and T304 together coordinate FAD. Position 300 (G300) interacts with D-proline. D-serine is bound at residue G300.

The protein belongs to the DAMOX/DASOX family. As to quaternary structure, homodimer. It depends on FAD as a cofactor.

Its subcellular location is the cytoplasm. The protein resides in the secreted. It localises to the cell wall. The catalysed reaction is a D-alpha-amino acid + O2 + H2O = a 2-oxocarboxylate + H2O2 + NH4(+). It carries out the reaction D-phenylalanine + O2 + H2O = 3-phenylpyruvate + H2O2 + NH4(+). The enzyme catalyses D-lysine + O2 + H2O = 6-amino-2-oxohexanoate + H2O2 + NH4(+). It catalyses the reaction D-methionine + O2 + H2O = 4-methylsulfanyl-2-oxobutanoate + H2O2 + NH4(+). The catalysed reaction is D-arginine + O2 + H2O = 5-guanidino-2-oxopentanoate + H2O2 + NH4(+). It carries out the reaction D-ornithine + O2 + H2O = 5-amino-2-oxopentanoate + H2O2 + NH4(+). The enzyme catalyses D-leucine + O2 + H2O = 4-methyl-2-oxopentanoate + H2O2 + NH4(+). It catalyses the reaction D-alanine + O2 + H2O = pyruvate + H2O2 + NH4(+). The catalysed reaction is D-valine + O2 + H2O = 3-methyl-2-oxobutanoate + H2O2 + NH4(+). It carries out the reaction D-histidine + O2 + H2O = 3-(imidazol-5-yl)pyruvate + H2O2 + NH4(+). In terms of biological role, catalyzes the oxidative deamination of D-amino acids with broad substrate specificity. This is D-amino-acid oxidase from Glutamicibacter protophormiae (Brevibacterium protophormiae).